We begin with the raw amino-acid sequence, 175 residues long: Adenine phosphoribosyltransferase (175 aa).

Belongs to the purine/pyrimidine phosphoribosyltransferase family. Homodimer.

It localises to the cytoplasm. It catalyses the reaction AMP + diphosphate = 5-phospho-alpha-D-ribose 1-diphosphate + adenine. It participates in purine metabolism; AMP biosynthesis via salvage pathway; AMP from adenine: step 1/1. In terms of biological role, catalyzes a salvage reaction resulting in the formation of AMP, that is energically less costly than de novo synthesis. This chain is Adenine phosphoribosyltransferase, found in Maricaulis maris (strain MCS10) (Caulobacter maris).